Here is a 90-residue protein sequence, read N- to C-terminus: YcgL domain-containing protein plu2139 (90 aa).

One can recognise a YcgL domain in the interval 1–85 (MICAIYSSPK…PVENLMNAHL (85 aa)).

This Photorhabdus laumondii subsp. laumondii (strain DSM 15139 / CIP 105565 / TT01) (Photorhabdus luminescens subsp. laumondii) protein is YcgL domain-containing protein plu2139.